Reading from the N-terminus, the 1253-residue chain is Guanine nucleotide exchange factor SDC25 (1253 aa).

The 73-residue stretch at 26-98 (QPIDVVECTY…PPSFTRSILN (73 aa)) folds into the SH3 domain. The disordered stretch occupies residues 624-649 (LNLDNAKDKKNGSQNTDIQEEEDEYE). An N-terminal Ras-GEF domain is found at 782-914 (GPIVRIKGGS…ELLKEVNQKF (133 aa)). One can recognise a Ras-GEF domain in the interval 952-1199 (VDPVLFATQL…QYQLSLIIEP (248 aa)). A disordered region spans residues 1202–1253 (RKKVVPNSNSNNKSQEKSRDDQTDEGKTSTKKDRFPKFQLHKTKKKAPKVSK). A compositionally biased stretch (basic and acidic residues) spans 1215–1237 (SQEKSRDDQTDEGKTSTKKDRFP). Basic residues predominate over residues 1240–1253 (QLHKTKKKAPKVSK).

Functionally, promotes the exchange of Ras-bound GDP by GTP. The sequence is that of Guanine nucleotide exchange factor SDC25 (SDC25) from Saccharomyces cerevisiae (Baker's yeast).